The primary structure comprises 387 residues: Proline-rich protein 5 (387 aa).

Interaction with RICTOR stretches follow at residues 10–96 (MSSP…LTKG) and 189–219 (HESR…YGLY). The segment at 11 to 33 (SSPSLSDLGKREPGAAGADERGT) is disordered. The segment covering 18–33 (LGKREPGAAGADERGT) has biased composition (basic and acidic residues). Position 253 is a phosphoserine (Ser-253). Disordered stretches follow at residues 262–347 (NPVA…PETL) and 365–387 (DFGR…PSVV). Positions 310 to 321 (SSPSPHSGPCPS) are enriched in low complexity. Ser-373 bears the Phosphoserine mark.

This sequence belongs to the PROTOR family. Associated component of the mechanistic target of rapamycin complex 2 (mTORC2). Binds directly to MTOR and RICTOR within the TORC2 complex.

Associated subunit of mTORC2, which regulates cell growth and survival in response to hormonal signals. mTORC2 is activated by growth factors, but, in contrast to mTORC1, seems to be nutrient-insensitive. mTORC2 seems to function upstream of Rho GTPases to regulate the actin cytoskeleton, probably by activating one or more Rho-type guanine nucleotide exchange factors. PRR5 plays an important role in regulation of PDGFRB expression and in modulation of platelet-derived growth factor signaling. May act as a tumor suppressor in breast cancer. This Rattus norvegicus (Rat) protein is Proline-rich protein 5.